The following is a 244-amino-acid chain: 5-oxoprolinase subunit A (244 aa).

Belongs to the LamB/PxpA family. In terms of assembly, forms a complex composed of PxpA, PxpB and PxpC.

It catalyses the reaction 5-oxo-L-proline + ATP + 2 H2O = L-glutamate + ADP + phosphate + H(+). Functionally, catalyzes the cleavage of 5-oxoproline to form L-glutamate coupled to the hydrolysis of ATP to ADP and inorganic phosphate. The polypeptide is 5-oxoprolinase subunit A (Escherichia coli (strain SE11)).